The following is a 184-amino-acid chain: MPNTQSPYIAFAMLLSSNGHPVTPAELHGLLIGRSCAGAGFDADAWLADAAQLLETEPGDTVRNALVGLQEMVKAELTGEDVAIVLLLPSDDAALADRAAALGQWCQGFITGFGLNAGGKDLSTDAKEVLQDLVAISQVQEALEESEDGENDYMEVMEYLRVAPLLLYTELAKPEAPATKPSLH.

This sequence belongs to the UPF0149 family.

In Pseudomonas entomophila (strain L48), this protein is UPF0149 protein PSEEN5316.